The chain runs to 274 residues: CTO1 family protein C17G9.12c (274 aa).

It belongs to the CTO1 family.

Its subcellular location is the cytoplasm. It is found in the nucleus. In Schizosaccharomyces pombe (strain 972 / ATCC 24843) (Fission yeast), this protein is CTO1 family protein C17G9.12c.